The chain runs to 340 residues: Glyceraldehyde-3-phosphate dehydrogenase (340 aa).

NAD(+)-binding positions include 11–12 (SI) and glycine 111. 140–142 (SCN) is a D-glyceraldehyde 3-phosphate binding site. Catalysis depends on cysteine 141, which acts as the Nucleophile. Arginine 169 is a binding site for NAD(+). 195–196 (HG) contacts D-glyceraldehyde 3-phosphate. Glutamine 303 is an NAD(+) binding site.

Belongs to the glyceraldehyde-3-phosphate dehydrogenase family. As to quaternary structure, homotetramer.

It is found in the cytoplasm. The catalysed reaction is D-glyceraldehyde 3-phosphate + phosphate + NADP(+) = (2R)-3-phospho-glyceroyl phosphate + NADPH + H(+). It catalyses the reaction D-glyceraldehyde 3-phosphate + phosphate + NAD(+) = (2R)-3-phospho-glyceroyl phosphate + NADH + H(+). It participates in carbohydrate degradation; glycolysis; pyruvate from D-glyceraldehyde 3-phosphate: step 1/5. This is Glyceraldehyde-3-phosphate dehydrogenase from Methanococcus maripaludis (strain C7 / ATCC BAA-1331).